The chain runs to 500 residues: NAD(P)H-quinone oxidoreductase chain 4, chloroplastic (500 aa).

14 helical membrane-spanning segments follow: residues 4-24, 35-55, 87-107, 111-131, 134-154, 167-187, 211-231, 242-262, 272-292, 313-333, 334-354, 386-406, 417-437, and 462-482; these read FPWL…IFFL, YTIA…CYHF, LGSI…AWPV, SQLF…LFSS, LLLF…LLSM, FILY…GMGL, ILLY…IPLH, HYST…YGLI, AHYL…IYAA, MGFI…GAIL, QILS…TACD, LALP…GLIT, LITF…LSML, and LFLL…PDFV.

The protein belongs to the complex I subunit 4 family.

Its subcellular location is the plastid. The protein resides in the chloroplast thylakoid membrane. It catalyses the reaction a plastoquinone + NADH + (n+1) H(+)(in) = a plastoquinol + NAD(+) + n H(+)(out). The enzyme catalyses a plastoquinone + NADPH + (n+1) H(+)(in) = a plastoquinol + NADP(+) + n H(+)(out). In Saccharum officinarum (Sugarcane), this protein is NAD(P)H-quinone oxidoreductase chain 4, chloroplastic.